Consider the following 142-residue polypeptide: Hemoglobin subunit alpha (142 aa).

At Ser-1 the chain carries N-acetylserine. The Globin domain maps to 1–142 (SLSDKDKNTV…LALALSERYR (142 aa)). His-59 is an O2 binding site. A heme b-binding site is contributed by His-88.

It belongs to the globin family. As to quaternary structure, heterotetramer of two alpha chains and two beta chains. Can form polymers. Red blood cells.

Involved in oxygen transport from gills to the various peripheral tissues. This Chelidonichthys kumu (Bluefin gurnard) protein is Hemoglobin subunit alpha (hba).